A 220-amino-acid chain; its full sequence is Ribose-5-phosphate isomerase A (220 aa).

Residues 29-32, 82-85, and 95-98 contribute to the substrate site; these read TGST, DGCD, and KGGG. The active-site Proton acceptor is the glutamate 104. Lysine 122 provides a ligand contact to substrate.

This sequence belongs to the ribose 5-phosphate isomerase family. As to quaternary structure, homodimer.

The catalysed reaction is aldehydo-D-ribose 5-phosphate = D-ribulose 5-phosphate. It functions in the pathway carbohydrate degradation; pentose phosphate pathway; D-ribose 5-phosphate from D-ribulose 5-phosphate (non-oxidative stage): step 1/1. Catalyzes the reversible conversion of ribose-5-phosphate to ribulose 5-phosphate. The sequence is that of Ribose-5-phosphate isomerase A from Laribacter hongkongensis (strain HLHK9).